Consider the following 186-residue polypeptide: Elongation factor P (186 aa).

This sequence belongs to the elongation factor P family.

The protein localises to the cytoplasm. It functions in the pathway protein biosynthesis; polypeptide chain elongation. Involved in peptide bond synthesis. Stimulates efficient translation and peptide-bond synthesis on native or reconstituted 70S ribosomes in vitro. Probably functions indirectly by altering the affinity of the ribosome for aminoacyl-tRNA, thus increasing their reactivity as acceptors for peptidyl transferase. This Polynucleobacter necessarius subsp. necessarius (strain STIR1) protein is Elongation factor P.